A 210-amino-acid polypeptide reads, in one-letter code: Large ribosomal subunit protein uL3 (210 aa).

Residues 133–152 are disordered; sequence ATHGNSLSHRVHGSTGQNQT. Q151 is subject to N5-methylglutamine.

Belongs to the universal ribosomal protein uL3 family. As to quaternary structure, part of the 50S ribosomal subunit. Forms a cluster with proteins L14 and L19. Methylated by PrmB.

One of the primary rRNA binding proteins, it binds directly near the 3'-end of the 23S rRNA, where it nucleates assembly of the 50S subunit. This is Large ribosomal subunit protein uL3 from Francisella philomiragia subsp. philomiragia (strain ATCC 25017 / CCUG 19701 / FSC 153 / O#319-036).